A 267-amino-acid polypeptide reads, in one-letter code: MSTKSYAERAKAHNSPVARKLLALMHEKKTNLCASLDVRTSRKLLELADTLGPHICLLKTHVDILTDFDIETTVKPLQQLAAKHNFMIFEDRKFADIGNTVKLQYSSGVYRIAEWADITNAHGVTGPGVIAGLKEAAKLASQEPRGLLMLAELSSQGSLARGDYTAGVVEMAKLDKDFVIGFIAQRDMGGRADGFDWLIMTPGVGLDDKGDGLGQQYRTVDEVVSDGTDVIIVGRGLFDKGRDPNVEGARYRKAGWEAYLRRIGETS.

Substrate-binding positions include Asp37, 59–61 (KTH), 91–100 (DRKFADIGNT), Tyr217, and Arg235. Lys93 (proton donor) is an active-site residue.

The protein belongs to the OMP decarboxylase family.

It carries out the reaction orotidine 5'-phosphate + H(+) = UMP + CO2. Its pathway is pyrimidine metabolism; UMP biosynthesis via de novo pathway; UMP from orotate: step 2/2. This is Orotidine 5'-phosphate decarboxylase (URA3) from Eremothecium gossypii (strain ATCC 10895 / CBS 109.51 / FGSC 9923 / NRRL Y-1056) (Yeast).